The sequence spans 611 residues: MPVDTSQRLAKLRELMKERHVDVYLIPSEDSHQSEYIAPCDARRAFISGFTGSAGCAIVSMSKAALSTDGRYFNQAAKQLDENWLLLKRGMENVPTWQEWTAEQAEGGKVVGVDPSLITAAEARKLSDTIKDTGGSLVGVPDNLVDLVWGGDRPARPREKVMVHPIEFAGQSFEEKITDLRKELTKKKRAGMVISMLDEIAWLYNLRGADIPFNPVFFAYAIVTHSTAELFVDEAKLTQAVKEHLGDKVALRPYESIFESLKLLSQAAASNGDEGHQKFLLSDKASWSLNLALGGEEKVEEVRSPIADAKAVKNAVELEGTRACHIRDGAALTEYFAWLENELINKKTVLNEVNASDKLAQIRSKHKDFVGLSFDTISSTGPNAAIIHYRAERGNCPNIDPNAVYLCDSGAQYLDGTTDTTRTLHFGKPTEMEKKAYTLVLKGLISIDTAVFPKGTTGYAIDAFARQHLWRNGLDYLHGTGHGVGSYLNVHEGPMGIGTRVQYAETPITAGNVLSDEPGYYEDGNFGIRIENIVVAKEVKTPHKFGDKPWIGFEHVTMTPLCQNLMDTSLLTAEEKKWVNDYHTEVWEKTKGFFNNDELTRNWLKRETQPI.

Aspartate 408, aspartate 419, glutamate 517, and glutamate 531 together coordinate Mn(2+).

Belongs to the peptidase M24B family. It depends on Mn(2+) as a cofactor.

It catalyses the reaction Release of any N-terminal amino acid, including proline, that is linked to proline, even from a dipeptide or tripeptide.. Its function is as follows. Catalyzes the removal of a penultimate prolyl residue from the N-termini of peptides. In Coccidioides posadasii (strain RMSCC 757 / Silveira) (Valley fever fungus), this protein is Probable Xaa-Pro aminopeptidase P (AMPP).